The sequence spans 100 residues: Small ribosomal subunit protein uS14c (100 aa).

It belongs to the universal ribosomal protein uS14 family. Part of the 30S ribosomal subunit.

It localises to the plastid. The protein resides in the chloroplast. Its function is as follows. Binds 16S rRNA, required for the assembly of 30S particles. The sequence is that of Small ribosomal subunit protein uS14c from Lotus japonicus (Lotus corniculatus var. japonicus).